An 836-amino-acid polypeptide reads, in one-letter code: Protein translocase subunit SecA (836 aa).

Residues Gln-85, 103–107, and Asp-492 contribute to the ATP site; that span reads GEGKT. Residues Cys-820, Cys-822, Cys-831, and Cys-832 each coordinate Zn(2+).

This sequence belongs to the SecA family. In terms of assembly, monomer and homodimer. Part of the essential Sec protein translocation apparatus which comprises SecA, SecYEG and auxiliary proteins SecDF. Other proteins may also be involved. Zn(2+) is required as a cofactor.

It is found in the cell membrane. The protein localises to the cytoplasm. The enzyme catalyses ATP + H2O + cellular proteinSide 1 = ADP + phosphate + cellular proteinSide 2.. Part of the Sec protein translocase complex. Interacts with the SecYEG preprotein conducting channel. Has a central role in coupling the hydrolysis of ATP to the transfer of proteins into and across the cell membrane, serving as an ATP-driven molecular motor driving the stepwise translocation of polypeptide chains across the membrane. The chain is Protein translocase subunit SecA from Clostridium botulinum (strain Alaska E43 / Type E3).